Consider the following 117-residue polypeptide: Ribosome-binding factor A (117 aa).

This sequence belongs to the RbfA family. As to quaternary structure, monomer. Binds 30S ribosomal subunits, but not 50S ribosomal subunits or 70S ribosomes.

The protein localises to the cytoplasm. Its function is as follows. One of several proteins that assist in the late maturation steps of the functional core of the 30S ribosomal subunit. Associates with free 30S ribosomal subunits (but not with 30S subunits that are part of 70S ribosomes or polysomes). Required for efficient processing of 16S rRNA. May interact with the 5'-terminal helix region of 16S rRNA. The chain is Ribosome-binding factor A from Lactiplantibacillus plantarum (strain ATCC BAA-793 / NCIMB 8826 / WCFS1) (Lactobacillus plantarum).